The chain runs to 274 residues: GATA transcription factor 1 (274 aa).

2 disordered regions span residues 1-39 (MEMESFMDDLLNFSVPEEEEDDDEHTQPPRNITRRKTGL) and 102-132 (SPVSVLETSSHSSTTTTSNSSGGSNGSTAVA). A Nuclear localization signal motif is present at residues 152-159 (KARSKRRR). The GATA-type zinc-finger motif lies at 190 to 244 (LIMGRKCQHCGAEKTPQWRAGPAGPKTLCNACGVRYKSGRLVPEYRPANSPTFTA).

It belongs to the type IV zinc-finger family. Class A subfamily. In terms of tissue distribution, mostly expressed in roots. Also expressed in stems, flowers and leaves.

It localises to the nucleus. In terms of biological role, transcriptional activator that specifically binds 5'-GATA-3' or 5'-GAT-3' motifs within gene promoters. May be involved in the regulation of some light-responsive genes. This is GATA transcription factor 1 (GATA1) from Arabidopsis thaliana (Mouse-ear cress).